We begin with the raw amino-acid sequence, 248 residues long: Ribonuclease HII (248 aa).

Residues 29–219 enclose the RNase H type-2 domain; it reads DIVCGVDEAG…VREAHLRLGT (191 aa). The a divalent metal cation site is built by Asp-35, Glu-36, and Asp-128.

The protein belongs to the RNase HII family. It depends on Mn(2+) as a cofactor. Requires Mg(2+) as cofactor.

The protein localises to the cytoplasm. The enzyme catalyses Endonucleolytic cleavage to 5'-phosphomonoester.. Functionally, endonuclease that specifically degrades the RNA of RNA-DNA hybrids. This chain is Ribonuclease HII, found in Paraburkholderia xenovorans (strain LB400).